Consider the following 525-residue polypeptide: Cysteine--tRNA ligase (525 aa).

Residue Cys-49 coordinates Zn(2+). The 'HIGH' region signature appears at 51–61 (VTVYDLCHLGH). Positions 258, 283, and 287 each coordinate Zn(2+). Positions 315–319 (KMSKS) match the 'KMSKS' region motif. Lys-318 contacts ATP.

It belongs to the class-I aminoacyl-tRNA synthetase family. In terms of assembly, monomer. Zn(2+) is required as a cofactor.

The protein localises to the cytoplasm. It catalyses the reaction tRNA(Cys) + L-cysteine + ATP = L-cysteinyl-tRNA(Cys) + AMP + diphosphate. The protein is Cysteine--tRNA ligase of Synechococcus sp. (strain JA-2-3B'a(2-13)) (Cyanobacteria bacterium Yellowstone B-Prime).